The primary structure comprises 209 residues: ATP-dependent Clp protease proteolytic subunit (209 aa).

Ser-107 acts as the Nucleophile in catalysis. His-132 is a catalytic residue.

Belongs to the peptidase S14 family. Fourteen ClpP subunits assemble into 2 heptameric rings which stack back to back to give a disk-like structure with a central cavity, resembling the structure of eukaryotic proteasomes.

It is found in the cytoplasm. The catalysed reaction is Hydrolysis of proteins to small peptides in the presence of ATP and magnesium. alpha-casein is the usual test substrate. In the absence of ATP, only oligopeptides shorter than five residues are hydrolyzed (such as succinyl-Leu-Tyr-|-NHMec, and Leu-Tyr-Leu-|-Tyr-Trp, in which cleavage of the -Tyr-|-Leu- and -Tyr-|-Trp bonds also occurs).. In terms of biological role, cleaves peptides in various proteins in a process that requires ATP hydrolysis. Has a chymotrypsin-like activity. Plays a major role in the degradation of misfolded proteins. The sequence is that of ATP-dependent Clp protease proteolytic subunit from Ruegeria pomeroyi (strain ATCC 700808 / DSM 15171 / DSS-3) (Silicibacter pomeroyi).